The chain runs to 556 residues: MAFNFNWSPLMADASFYTRAQDLLTAALNKSPKPPIIVDDIHVTELNLGSIPPELEILEIGDLAEDRFRGIFKMSYTGDAFLTLKTRVQANPLNTFLLTRPTFGSPVPLAAATPLTIPLQITLSDFKLSGFVILVFSKQKGITVVFRNDPLESLKVSSTFDSIPFVRDFLQKEIEAQLRILFMDELPAIIHRLSLRLWVPEYRTGEEMNDETDNTAKSSEGPGQDPLASPPQDPVDSLGNALNESEIASLSLDSSVETHSLFSQKNLLRLAALTDSQRTLSLFTPSIQEVVYRAWTSPTDTSEFPSSVISPLSPTLSREQSQMGSMSSLHETASNASMQSRPSMSSHSFSTSTYGLSLGAGRHSKAHARKRKKRVVDLRRPKTTDDAMSVSDESVMTESSRPPSIASAPLPIVNEPSDDPVTPPLSPEVDCHLPIIPERHLPSFSRPTRRDADLSYSHETIRGPKAEDVDATPRATMRGYPQERAEAGPSSNQRTPLPAAVLPFSKDENANVDPVLVDRLAGEIARRMREDKLMTNACSGFWSRQHEDSPPPAYGH.

In terms of domain architecture, SMP-LTD spans 1 to 195 (MAFNFNWSPL…LPAIIHRLSL (195 aa)). Disordered stretches follow at residues 206–239 (EEMNDETDNTAKSSEGPGQDPLASPPQDPVDSLG), 299–423 (TDTS…PVTP), and 440–473 (HLPSFSRPTRRDADLSYSHETIRGPKAEDVDATP). Residues 299–333 (TDTSEFPSSVISPLSPTLSREQSQMGSMSSLHETA) are compositionally biased toward polar residues. Positions 334-357 (SNASMQSRPSMSSHSFSTSTYGLS) are enriched in low complexity. A compositionally biased stretch (basic residues) spans 362–374 (RHSKAHARKRKKR). The segment covering 375–385 (VVDLRRPKTTD) has biased composition (basic and acidic residues). Residues 391-402 (SDESVMTESSRP) are compositionally biased toward polar residues. Basic and acidic residues predominate over residues 459-468 (ETIRGPKAED).

Belongs to the MDM34 family. Component of the ER-mitochondria encounter structure (ERMES) or MDM complex, composed of mmm1, mdm10, mdm12 and mdm34.

Its subcellular location is the mitochondrion outer membrane. In terms of biological role, component of the ERMES/MDM complex, which serves as a molecular tether to connect the endoplasmic reticulum (ER) and mitochondria. Components of this complex are involved in the control of mitochondrial shape and protein biogenesis, and function in nonvesicular lipid trafficking between the ER and mitochondria. Mdm34 is required for the interaction of the ER-resident membrane protein mmm1 and the outer mitochondrial membrane-resident beta-barrel protein mdm10. In Penicillium rubens (strain ATCC 28089 / DSM 1075 / NRRL 1951 / Wisconsin 54-1255) (Penicillium chrysogenum), this protein is Mitochondrial distribution and morphology protein 34-2.